A 184-amino-acid polypeptide reads, in one-letter code: ATP synthase subunit delta (184 aa).

It belongs to the ATPase delta chain family. F-type ATPases have 2 components, F(1) - the catalytic core - and F(0) - the membrane proton channel. F(1) has five subunits: alpha(3), beta(3), gamma(1), delta(1), epsilon(1). F(0) has three main subunits: a(1), b(2) and c(10-14). The alpha and beta chains form an alternating ring which encloses part of the gamma chain. F(1) is attached to F(0) by a central stalk formed by the gamma and epsilon chains, while a peripheral stalk is formed by the delta and b chains.

It localises to the cell inner membrane. Functionally, f(1)F(0) ATP synthase produces ATP from ADP in the presence of a proton or sodium gradient. F-type ATPases consist of two structural domains, F(1) containing the extramembraneous catalytic core and F(0) containing the membrane proton channel, linked together by a central stalk and a peripheral stalk. During catalysis, ATP synthesis in the catalytic domain of F(1) is coupled via a rotary mechanism of the central stalk subunits to proton translocation. This protein is part of the stalk that links CF(0) to CF(1). It either transmits conformational changes from CF(0) to CF(1) or is implicated in proton conduction. This is ATP synthase subunit delta from Rickettsia canadensis (strain McKiel).